A 139-amino-acid polypeptide reads, in one-letter code: Cytochrome c-type biogenesis protein CcmE (139 aa).

Residues 1 to 7 lie on the Cytoplasmic side of the membrane; that stretch reads MTKRQNR. A helical; Signal-anchor for type II membrane protein membrane pass occupies residues 8–28; the sequence is MTLVALLVIGVSLTGYLGLKA. The Periplasmic segment spans residues 29–139; sequence FNENLLYFFS…ADALEKAKNK (111 aa). Heme is bound by residues His-120 and Tyr-124.

It belongs to the CcmE/CycJ family.

It is found in the cell inner membrane. Functionally, heme chaperone required for the biogenesis of c-type cytochromes. Transiently binds heme delivered by CcmC and transfers the heme to apo-cytochromes in a process facilitated by CcmF and CcmH. The chain is Cytochrome c-type biogenesis protein CcmE from Ruthia magnifica subsp. Calyptogena magnifica.